The following is a 281-amino-acid chain: Shikimate dehydrogenase (NADP(+)) (281 aa).

Shikimate is bound by residues 20 to 22 (SRS) and T67. Residue K71 is the Proton acceptor of the active site. D83 serves as a coordination point for NADP(+). Shikimate is bound by residues N92 and D108. Residues 133–137 (GAGGA), 157–162 (NRTEAR), and M225 each bind NADP(+). Y227 serves as a coordination point for shikimate. G248 contributes to the NADP(+) binding site.

This sequence belongs to the shikimate dehydrogenase family. Homodimer.

The catalysed reaction is shikimate + NADP(+) = 3-dehydroshikimate + NADPH + H(+). The protein operates within metabolic intermediate biosynthesis; chorismate biosynthesis; chorismate from D-erythrose 4-phosphate and phosphoenolpyruvate: step 4/7. Involved in the biosynthesis of the chorismate, which leads to the biosynthesis of aromatic amino acids. Catalyzes the reversible NADPH linked reduction of 3-dehydroshikimate (DHSA) to yield shikimate (SA). The chain is Shikimate dehydrogenase (NADP(+)) from Paracidovorax citrulli (strain AAC00-1) (Acidovorax citrulli).